Reading from the N-terminus, the 80-residue chain is Protein KorB (80 aa).

DNA-binding regions (H-T-H motif) lie at residues A13–D32 and N56–E75.

Repressor for the transcription of certain pIJ101 promoters, including those the from kilA and kilB loci. The sequence is that of Protein KorB (korB) from Streptomyces lividans.